The sequence spans 59 residues: Large ribosomal subunit protein bL32 (59 aa).

This sequence belongs to the bacterial ribosomal protein bL32 family.

This chain is Large ribosomal subunit protein bL32, found in Lactiplantibacillus plantarum (strain ATCC BAA-793 / NCIMB 8826 / WCFS1) (Lactobacillus plantarum).